A 352-amino-acid polypeptide reads, in one-letter code: N-acetyl-gamma-glutamyl-phosphate reductase (352 aa).

Cys156 is a catalytic residue.

It belongs to the NAGSA dehydrogenase family. Type 1 subfamily.

Its subcellular location is the cytoplasm. It catalyses the reaction N-acetyl-L-glutamate 5-semialdehyde + phosphate + NADP(+) = N-acetyl-L-glutamyl 5-phosphate + NADPH + H(+). Its pathway is amino-acid biosynthesis; L-arginine biosynthesis; N(2)-acetyl-L-ornithine from L-glutamate: step 3/4. Its function is as follows. Catalyzes the NADPH-dependent reduction of N-acetyl-5-glutamyl phosphate to yield N-acetyl-L-glutamate 5-semialdehyde. This chain is N-acetyl-gamma-glutamyl-phosphate reductase, found in Afipia carboxidovorans (strain ATCC 49405 / DSM 1227 / KCTC 32145 / OM5) (Oligotropha carboxidovorans).